A 473-amino-acid chain; its full sequence is Photosystem II CP43 reaction center protein (473 aa).

The propeptide occupies 1 to 14 (MKTLYSLRRFYPVE). T15 carries the post-translational modification N-acetylthreonine. Phosphothreonine is present on T15. The next 5 helical transmembrane spans lie at 69-93 (LFEV…PHLA), 134-155 (LLGP…KDRN), 178-200 (KALY…RKIT), 255-275 (KPFA…LSYS), and 291-312 (WFNN…ASQA). A [CaMn4O5] cluster-binding site is contributed by E367. A helical transmembrane segment spans residues 447-471 (RARAAAAGFEKGIDRDFEPVLSMTP).

It belongs to the PsbB/PsbC family. PsbC subfamily. As to quaternary structure, PSII is composed of 1 copy each of membrane proteins PsbA, PsbB, PsbC, PsbD, PsbE, PsbF, PsbH, PsbI, PsbJ, PsbK, PsbL, PsbM, PsbT, PsbX, PsbY, PsbZ, Psb30/Ycf12, at least 3 peripheral proteins of the oxygen-evolving complex and a large number of cofactors. It forms dimeric complexes. Binds multiple chlorophylls and provides some of the ligands for the Ca-4Mn-5O cluster of the oxygen-evolving complex. It may also provide a ligand for a Cl- that is required for oxygen evolution. PSII binds additional chlorophylls, carotenoids and specific lipids. serves as cofactor.

The protein localises to the plastid. It localises to the chloroplast thylakoid membrane. One of the components of the core complex of photosystem II (PSII). It binds chlorophyll and helps catalyze the primary light-induced photochemical processes of PSII. PSII is a light-driven water:plastoquinone oxidoreductase, using light energy to abstract electrons from H(2)O, generating O(2) and a proton gradient subsequently used for ATP formation. This is Photosystem II CP43 reaction center protein from Drimys granadensis.